Here is a 272-residue protein sequence, read N- to C-terminus: Bis(5'-nucleosyl)-tetraphosphatase, symmetrical (272 aa).

It belongs to the Ap4A hydrolase family.

It carries out the reaction P(1),P(4)-bis(5'-adenosyl) tetraphosphate + H2O = 2 ADP + 2 H(+). Hydrolyzes diadenosine 5',5'''-P1,P4-tetraphosphate to yield ADP. In Glaesserella parasuis serovar 5 (strain SH0165) (Haemophilus parasuis), this protein is Bis(5'-nucleosyl)-tetraphosphatase, symmetrical.